The sequence spans 426 residues: 3-phosphoshikimate 1-carboxyvinyltransferase (426 aa).

3 residues coordinate 3-phosphoshikimate: Lys-23, Ser-24, and Arg-28. A phosphoenolpyruvate-binding site is contributed by Lys-23. Residues Gly-96 and Arg-124 each contribute to the phosphoenolpyruvate site. 3-phosphoshikimate contacts are provided by Thr-170, Ser-171, Gln-172, Ser-198, Asp-314, and Lys-341. Gln-172 contributes to the phosphoenolpyruvate binding site. Asp-314 serves as the catalytic Proton acceptor. Positions 345, 386, and 411 each coordinate phosphoenolpyruvate.

This sequence belongs to the EPSP synthase family. In terms of assembly, monomer.

The protein localises to the cytoplasm. It carries out the reaction 3-phosphoshikimate + phosphoenolpyruvate = 5-O-(1-carboxyvinyl)-3-phosphoshikimate + phosphate. It participates in metabolic intermediate biosynthesis; chorismate biosynthesis; chorismate from D-erythrose 4-phosphate and phosphoenolpyruvate: step 6/7. Its function is as follows. Catalyzes the transfer of the enolpyruvyl moiety of phosphoenolpyruvate (PEP) to the 5-hydroxyl of shikimate-3-phosphate (S3P) to produce enolpyruvyl shikimate-3-phosphate and inorganic phosphate. The sequence is that of 3-phosphoshikimate 1-carboxyvinyltransferase from Nostoc punctiforme (strain ATCC 29133 / PCC 73102).